A 293-amino-acid polypeptide reads, in one-letter code: 16S rRNA (guanine(1405)-N(7))-methyltransferase (293 aa).

Residues phenylalanine 47, 80 to 82, arginine 86, alanine 111, aspartate 134, 160 to 161, leucine 176, and glutamine 185 each bind S-adenosyl-L-methionine; these read HAS and DL. A compositionally biased stretch (low complexity) spans 258 to 274; that stretch reads GRPAPAEGAAEPGATRP. Residues 258-293 are disordered; the sequence is GRPAPAEGAAEPGATRPVVDVPATARPDADRVDPTG. Over residues 284–293 the composition is skewed to basic and acidic residues; sequence PDADRVDPTG.

This sequence belongs to the methyltransferase superfamily. Aminoglycoside resistance family.

It carries out the reaction guanosine(1405) in 16S rRNA + S-adenosyl-L-methionine = N(7)-methylguanosine(1405) in 16S rRNA + S-adenosyl-L-homocysteine. Functionally, specifically methylates the N(7) position of guanine 1405 in 16S rRNA. Confers resistance to aminoglycosides. In Micromonospora olivasterospora, this protein is 16S rRNA (guanine(1405)-N(7))-methyltransferase (fmrO).